A 1146-amino-acid polypeptide reads, in one-letter code: MKTLRARFKKTELRLSPTDLGSCPPCGPCPIPKPAARGRRQSQDWGKSDERLLQAVENNDAPRVAALIARKGLVPTKLDPEGKSAFHLAAMRGAASCLEVMIAHGSNVMSADGAGYNALHLAAKYGHPQCLKQLLQASCVVDVVDSSGWTALHHAAAGGCLSCSEVLCSFKAHLNPQDRSGATPLIIAAQMCHTDLCRLLLQQGAAANDQDLQGRTALMLACEGASPETVEVLLQGGAQPGITDALGQDAAHYGALAGDKLILHLLQEAAQRPSPPSALTEDDSGEASSQNSMSSHGKQGAPKKRKAPPPPASIPMPDDRDAYEEIVRLRQERGRLLQKIRGLEQHKERRQQESPEASSLHILERQVQELQQLLVERQEEKESLGREVESLQSRLSLLENERENTSYDVTTLQDEEGELPDLPGAEVLLSRQLSPSAQEHLASLQEQVAVLTRQNQELMEKVQILENFEKDETQMEVEALAEVIPLALYDSLRAEFDQLRRQHAEALQALRQQETREVPREEGAACGESEVAGATATKNGPTHMELNGSVAPETKVNGAETIDEEAAGDETMEARTMEAEATGAEATGAEATGAKVTETKPTGAEVREMETTEEEANMETKPTGAQATDTETTGVEAMGVEATKTKAEEAEMQAYGVGAGQAEPPVTGTTNMEATGSRATGMESTGVSATGVENPGVEATVPGISAGPILHPGAAEASEKLQVELETRIRGLEEALRQREREAAAELEAALGKCEAAEAEAGRLRERVREAEGSGASGGGGGDTTQLRAALEQAREDLRDRDSRLRELEAASACLDEARASRLLAEEEARGLRAELAQREEARLEQSRELEVLREQLATARATGEQQRTAAAELGRARDAAEARVAELPAACEEARQGLAELREASEALRQSVVPASEHRRLQEEALELRGRAASLEQEVVATGKEAARLRAELERERVCSVALSEHERIVGTLQANVAQLEGQLEELGRRHEKTSAEVFQVQREALFMKSERHAAEAQLATAEQQLRGLRTEAERARQAQSRAQEALDKAKEKDKKITELSKEVFNLKEALKEQPAALATPEVEALRDQVKDLQQQLQEAARDHSSVVALYRSHLLYAIQGQMDEDVQRILSQILQMQRLQAQGR.

5 ANK repeats span residues 81–110, 114–143, 147–176, 180–209, and 213–242; these read EGKS…NVMS, AGYN…VVDV, SGWT…HLNP, SGAT…AAND, and QGRT…QPGI. Disordered regions lie at residues 272-320, 607-627, and 766-785; these read RPSP…PDDR, REME…GAQA, and ERVR…GDTT. The span at 286 to 297 shows a compositional bias: polar residues; that stretch reads EASSQNSMSSHG. Residues 320–517 adopt a coiled-coil conformation; it reads RDAYEEIVRL…QALRQQETRE (198 aa). A coiled-coil region spans residues 714 to 1110; it reads AAEASEKLQV…AARDHSSVVA (397 aa).

In terms of assembly, homodimer. Interacts (via C-terminal domain) with TRIOBP (via C-terminal domain) isoform 4; recruits TRIOBP isoform 4 to stereocilia rootlets.

It localises to the cell membrane. The protein localises to the cell projection. Its subcellular location is the stereocilium. In terms of biological role, component of the stereocilia rootlet in hair cells of inner ear. Bridges the apical plasma membrane with the lower rootlet and maintains normal distribution of TRIOBP, thereby reinforcing stereocilia insertion points and organizing rootlets for hearing with long-term resilience. This is Ankyrin repeat domain-containing protein 24 from Homo sapiens (Human).